The following is a 708-amino-acid chain: Elongation factor G (708 aa).

The 283-residue stretch at 8-290 (KRYRNIGISA…AVIQYLPAPM (283 aa)) folds into the tr-type G domain. GTP contacts are provided by residues 17 to 24 (AHIDAGKT), 88 to 92 (DTPGH), and 142 to 145 (NKMD).

This sequence belongs to the TRAFAC class translation factor GTPase superfamily. Classic translation factor GTPase family. EF-G/EF-2 subfamily.

The protein localises to the cytoplasm. Its function is as follows. Catalyzes the GTP-dependent ribosomal translocation step during translation elongation. During this step, the ribosome changes from the pre-translocational (PRE) to the post-translocational (POST) state as the newly formed A-site-bound peptidyl-tRNA and P-site-bound deacylated tRNA move to the P and E sites, respectively. Catalyzes the coordinated movement of the two tRNA molecules, the mRNA and conformational changes in the ribosome. The sequence is that of Elongation factor G from Psychrobacter cryohalolentis (strain ATCC BAA-1226 / DSM 17306 / VKM B-2378 / K5).